The chain runs to 179 residues: MEATSHPAVHPVAVPPQFQGAGPPAIQMKDFPGSPGTAGGLALRFTQFGFSLISLCIMVSIAGFSSVTAFCFLVATMVFQCIWSLCLGALDIYALLTQRSFRNPLIVSLFVVGDWVTSTMTFAGACAAAGITVLIDNDLEQCGPNHCGRFEAAAAMAFMSWTATTLSFCLSFWLLASCR.

Over 1–54 (MEATSHPAVHPVAVPPQFQGAGPPAIQMKDFPGSPGTAGGLALRFTQFGFSLIS) the chain is Cytoplasmic. Helical transmembrane passes span 55–75 (LCIM…FLVA) and 76–96 (TMVF…YALL). Residues 97-114 (TQRSFRNPLIVSLFVVGD) are Cytoplasmic-facing. Residues 115 to 135 (WVTSTMTFAGACAAAGITVLI) traverse the membrane as a helical segment. At 136–154 (DNDLEQCGPNHCGRFEAAA) the chain is on the extracellular side. A helical transmembrane segment spans residues 155–175 (AMAFMSWTATTLSFCLSFWLL). At 176 to 179 (ASCR) the chain is on the cytoplasmic side.

This sequence belongs to the Casparian strip membrane proteins (CASP) family. Homodimer and heterodimers.

Its subcellular location is the cell membrane. The protein is CASP-like protein 5A2 of Physcomitrium patens (Spreading-leaved earth moss).